Reading from the N-terminus, the 60-residue chain is LKCNKLVPLFYKTCPAGKDLCYKMYMVATPKVPVKRGCIDVCPKSSLLVKYVCCNTDRCN.

4 disulfides stabilise this stretch: C3–C21, C14–C38, C42–C53, and C54–C59.

This sequence belongs to the three-finger toxin family. Short-chain subfamily. Type IA cytotoxin sub-subfamily. As to quaternary structure, monomer in solution; Homodimer and oligomer in the presence of negatively charged lipids forming a pore with a size ranging between 20 and 30 Angstroms. Expressed by the venom gland.

The protein resides in the secreted. It localises to the target cell membrane. Shows cytolytic activity on many different cells by forming pore in lipid membranes. In vivo, increases heart rate or kills the animal by cardiac arrest. In addition, it binds to heparin with high affinity, interacts with Kv channel-interacting protein 1 (KCNIP1) in a calcium-independent manner, and binds to integrin alpha-V/beta-3 (ITGAV/ITGB3) with moderate affinity. Has hemolytic activity towards human erythrocytes (EC(50)=0.162 uM) and cytolytic activity towards various cell lines. This is Cytotoxin 10 from Naja naja (Indian cobra).